A 469-amino-acid polypeptide reads, in one-letter code: Putative dipeptidase SH1171 (469 aa).

H84 is a Zn(2+) binding site. D86 is a catalytic residue. D115 provides a ligand contact to Zn(2+). The active-site Proton acceptor is the E149. Zn(2+) is bound by residues E150, D173, and H440.

This sequence belongs to the peptidase M20A family. Zn(2+) is required as a cofactor.

In Staphylococcus haemolyticus (strain JCSC1435), this protein is Putative dipeptidase SH1171.